The sequence spans 102 residues: Phosphoribosyl-ATP pyrophosphatase (102 aa).

It belongs to the PRA-PH family.

It localises to the cytoplasm. It catalyses the reaction 1-(5-phospho-beta-D-ribosyl)-ATP + H2O = 1-(5-phospho-beta-D-ribosyl)-5'-AMP + diphosphate + H(+). It functions in the pathway amino-acid biosynthesis; L-histidine biosynthesis; L-histidine from 5-phospho-alpha-D-ribose 1-diphosphate: step 2/9. The polypeptide is Phosphoribosyl-ATP pyrophosphatase (Jannaschia sp. (strain CCS1)).